The primary structure comprises 296 residues: MDKTISVIGMPMDLGQARRGVDMGPSAIRYAHLIERLSDMGYTVEDLGDIPINREKIKNDEELKNLNSVLAGNEKLAQKVNKVIEEKKFPLVLGGDHSIAIGTLAGTAKHYDNLGVIWYDAHGDLNTLETSPSGNIHGMPLAVSLGIGHESLVNLEGYAPKIKPENVVIIGARSLDEGERKYIKESGMKVYTMHEIDRLGMTKVIEETLDYLSACDGVHLSLDLDGLDPNDAPGVGTPVVGGISYRESHLAMEMLYDAGIITSAEFVEVNPILDHKNKTGKTAVELVESLLGKKLL.

4 residues coordinate Mn(2+): H97, D120, H122, and D124. Substrate contacts are provided by residues 122–126 (HGDLN), 133–135 (SGN), and D176. The Mn(2+) site is built by D223 and D225. 2 residues coordinate substrate: T237 and E268.

It belongs to the arginase family. Requires Mn(2+) as cofactor.

It catalyses the reaction L-arginine + H2O = urea + L-ornithine. Its pathway is nitrogen metabolism; urea cycle; L-ornithine and urea from L-arginine: step 1/1. Its function is as follows. Involved in the catabolism of arginine. This is Arginase from Bacillus subtilis (strain 168).